Reading from the N-terminus, the 236-residue chain is uncharacterized protein (236 aa).

This sequence belongs to the RHS family.

This is an uncharacterized protein from Escherichia coli (strain K12).